The chain runs to 143 residues: Endoribonuclease YbeY (143 aa).

Positions 106, 110, and 116 each coordinate Zn(2+).

Belongs to the endoribonuclease YbeY family. Requires Zn(2+) as cofactor.

It localises to the cytoplasm. Single strand-specific metallo-endoribonuclease involved in late-stage 70S ribosome quality control and in maturation of the 3' terminus of the 16S rRNA. This is Endoribonuclease YbeY from Petrotoga mobilis (strain DSM 10674 / SJ95).